The following is an 81-amino-acid chain: Large ribosomal subunit protein uL23 (81 aa).

This sequence belongs to the universal ribosomal protein uL23 family. As to quaternary structure, part of the 50S ribosomal subunit. Contacts protein L29.

In terms of biological role, binds to 23S rRNA. One of the proteins that surrounds the polypeptide exit tunnel on the outside of the ribosome. The polypeptide is Large ribosomal subunit protein uL23 (Pyrobaculum aerophilum (strain ATCC 51768 / DSM 7523 / JCM 9630 / CIP 104966 / NBRC 100827 / IM2)).